Reading from the N-terminus, the 715-residue chain is MDLKKTVLCESLIIWLQTFKTAAPCKTVEDLTSGAAMSQALHQIDPSWFSESWLARIKEDVGDNVRLKMNNLKKILQMIVDYYNEVLAQQMSDFPLPDLMRVVEQSDQVELGRLLQLILGCAVKCDRKQEYIQIIMTLEESVQHVVMTAIQELMSRESVSQLGAEPAGDTEQQLKKALEDLTEVMAEKEELAQRCQELDMQVTVLQEERNSLLAENDLLTDRSSQLETFDDPSTPSGRKHSQLQFQLEQLQEENFRLEAAKDDYRIHCEELEKQLVELQHRNDELTSLAEESRSLKDELDILRSCSDRAVKLEASVETYRKKLEDLSDLRRQMKALEEKNMTYMHNTVSLEEELRKANAARAQLETYKRQVQELHKKLSDESRRADNLVFEMKKLQEKYDALVKERERISIERDTLRETNEELRCTQAQQDQLLLAGKYQTGSPSHDNLAAEMLPIEYREKFIRLQHENKMLRLQQEESEKQRITELQQQLEEARRGRSQLDTDNRLNRERISELQQQVEDLQKALQTQGAKPDDSHLKRKLDAHMVQLNEAQDEIMKKKELLEDLQPDATQTSVKMDELMAALKKKDEDMRAMEDRYKMYLEKARDVIRALDPKLNPASAEIQSLKVQLSDKDKKIIALERECEQAKLREYEEKLIVTAWYNKSLNFQKMAIESRLSGRANSLVPPGQSFLAQQRQVTNARRTMSINVPASSSK.

The region spanning 6 to 122 (TVLCESLIIW…RLLQLILGCA (117 aa)) is the Calponin-homology (CH) domain. 2 coiled-coil regions span residues 167–434 (AGDT…DQLL) and 463–656 (IRLQ…EEKL).

It belongs to the hook family. Interacts with microtubules.

It localises to the cytoplasm. Its subcellular location is the cytoskeleton. May function to promote vesicle trafficking and/or fusion. The chain is Protein Hook homolog 1 (hook1) from Danio rerio (Zebrafish).